Reading from the N-terminus, the 112-residue chain is MHELSLATALVETALWQAVQAEAQQIVSLKLRLGTWAGVDAEALRFAFSLVQQDTIAASAQLVIESVPAQFRCQTCGQQTPPPLLAACSHCGSDRWQLQQGRELQLQSMEVV.

His-2 is a Ni(2+) binding site. Zn(2+)-binding residues include Cys-73, Cys-76, Cys-88, and Cys-91.

It belongs to the HypA/HybF family.

Functionally, involved in the maturation of [NiFe] hydrogenases. Required for nickel insertion into the metal center of the hydrogenase. In Synechococcus elongatus (strain ATCC 33912 / PCC 7942 / FACHB-805) (Anacystis nidulans R2), this protein is Hydrogenase maturation factor HypA.